We begin with the raw amino-acid sequence, 396 residues long: 1-deoxy-D-xylulose 5-phosphate reductoisomerase (396 aa).

Residues T13, G14, S15, I16, and N127 each contribute to the NADPH site. Residue K128 coordinates 1-deoxy-D-xylulose 5-phosphate. E129 contributes to the NADPH binding site. D153 provides a ligand contact to Mn(2+). 1-deoxy-D-xylulose 5-phosphate-binding residues include S154, E155, S184, and H207. E155 is a binding site for Mn(2+). G213 is a binding site for NADPH. 1-deoxy-D-xylulose 5-phosphate-binding residues include S220, N225, K226, and E229. Mn(2+) is bound at residue E229.

The protein belongs to the DXR family. Mg(2+) is required as a cofactor. Requires Mn(2+) as cofactor.

It carries out the reaction 2-C-methyl-D-erythritol 4-phosphate + NADP(+) = 1-deoxy-D-xylulose 5-phosphate + NADPH + H(+). The protein operates within isoprenoid biosynthesis; isopentenyl diphosphate biosynthesis via DXP pathway; isopentenyl diphosphate from 1-deoxy-D-xylulose 5-phosphate: step 1/6. In terms of biological role, catalyzes the NADPH-dependent rearrangement and reduction of 1-deoxy-D-xylulose-5-phosphate (DXP) to 2-C-methyl-D-erythritol 4-phosphate (MEP). The chain is 1-deoxy-D-xylulose 5-phosphate reductoisomerase from Pseudomonas fluorescens (strain ATCC BAA-477 / NRRL B-23932 / Pf-5).